A 405-amino-acid polypeptide reads, in one-letter code: Terpene cyclase pbrA (405 aa).

Positions 103, 168, 229, 233, 237, and 241 each coordinate Mg(2+). The D(D/E)XX(D/E) motif signature appears at 103 to 108; that stretch reads DDEISS. The NSE motif motif lies at 227–237; it reads LVNDLFSFYKE. The WxxxxxRY motif motif lies at 316-323; the sequence is EDLGGSSA.

It belongs to the trichodiene synthase family. Requires Mg(2+) as cofactor.

It functions in the pathway secondary metabolite biosynthesis; terpenoid biosynthesis. Terpene cyclase; part of the gene cluster that mediates the biosynthesis of the sesquiterpenoid aspterric acid (AA), an inhibitor of dihydroxy-acid dehydratase (DHAD) effective as an herbicide. PbrA cyclizes farnesyl diphosphate (FPP) to produce (-)-daucane. The cytochrome P450 monooxygenase pbrBB then converts (-)-daucane into the alpha-epoxy carboxylate intermediate which is further converted into the tricyclic aspterric acid by the cytochrome P450 monooxygenase pbrC. The polypeptide is Terpene cyclase pbrA (Penicillium brasilianum).